We begin with the raw amino-acid sequence, 90 residues long: Small ribosomal subunit protein uS15 (90 aa).

The protein belongs to the universal ribosomal protein uS15 family. Part of the 30S ribosomal subunit. Forms a bridge to the 50S subunit in the 70S ribosome, contacting the 23S rRNA.

One of the primary rRNA binding proteins, it binds directly to 16S rRNA where it helps nucleate assembly of the platform of the 30S subunit by binding and bridging several RNA helices of the 16S rRNA. In terms of biological role, forms an intersubunit bridge (bridge B4) with the 23S rRNA of the 50S subunit in the ribosome. This is Small ribosomal subunit protein uS15 from Aquifex aeolicus (strain VF5).